The sequence spans 302 residues: Recombination-associated protein RdgC (302 aa).

The protein belongs to the RdgC family.

It localises to the cytoplasm. The protein localises to the nucleoid. May be involved in recombination. This chain is Recombination-associated protein RdgC, found in Xylella fastidiosa (strain M12).